Consider the following 117-residue polypeptide: UPF0295 protein RBAM_008830 (117 aa).

Helical transmembrane passes span 13–33 and 41–61; these read TFALSLVFVGFIIMYIGLFFK and LFMILGLLSIGLSTAVYFWIG.

This sequence belongs to the UPF0295 family.

The protein resides in the cell membrane. The protein is UPF0295 protein RBAM_008830 of Bacillus velezensis (strain DSM 23117 / BGSC 10A6 / LMG 26770 / FZB42) (Bacillus amyloliquefaciens subsp. plantarum).